A 499-amino-acid polypeptide reads, in one-letter code: Glycerol kinase (499 aa).

Thr15 contacts ADP. 3 residues coordinate ATP: Thr15, Thr16, and Ser17. Thr15 serves as a coordination point for sn-glycerol 3-phosphate. Position 19 (Arg19) interacts with ADP. Sn-glycerol 3-phosphate is bound by residues Arg85, Glu86, Tyr137, and Asp246. Glycerol-binding residues include Arg85, Glu86, Tyr137, Asp246, and Gln247. ADP contacts are provided by Thr268 and Gly311. Residues Thr268, Gly311, Gln315, and Gly412 each contribute to the ATP site. ADP contacts are provided by Gly412 and Asn416.

This sequence belongs to the FGGY kinase family.

The catalysed reaction is glycerol + ATP = sn-glycerol 3-phosphate + ADP + H(+). It functions in the pathway polyol metabolism; glycerol degradation via glycerol kinase pathway; sn-glycerol 3-phosphate from glycerol: step 1/1. Inhibited by fructose 1,6-bisphosphate (FBP). In terms of biological role, key enzyme in the regulation of glycerol uptake and metabolism. Catalyzes the phosphorylation of glycerol to yield sn-glycerol 3-phosphate. The protein is Glycerol kinase of Parabacteroides distasonis (strain ATCC 8503 / DSM 20701 / CIP 104284 / JCM 5825 / NCTC 11152).